The sequence spans 233 residues: Homeobox protein Hox-D4a (233 aa).

Positions 124–129 (VYPWMK) match the Antp-type hexapeptide motif. The segment at residues 145–204 (PKRSRTAYTRQQVLELEKEFHFNRYLTRRRRIEIAHTLCLSERQIKIWFQNRRMKWTKDH) is a DNA-binding region (homeobox). A disordered region spans residues 203 to 233 (DHKLPNTKGRSAPASSHLQSIHKDQTDITSL). Positions 223–233 (IHKDQTDITSL) are enriched in basic and acidic residues.

It belongs to the Antp homeobox family. Deformed subfamily.

The protein resides in the nucleus. Sequence-specific transcription factor which is part of a developmental regulatory system that provides cells with specific positional identities on the anterior-posterior axis. The chain is Homeobox protein Hox-D4a (hoxd4a) from Takifugu rubripes (Japanese pufferfish).